A 42-amino-acid chain; its full sequence is Omega-theraphotoxin-Asp3a (42 aa).

Intrachain disulfides connect cysteine 1–cysteine 16, cysteine 8–cysteine 21, and cysteine 15–cysteine 30.

The protein belongs to the neurotoxin 14 (magi-1) family. 08 (Ltx-4) subfamily. Expressed by the venom gland.

The protein resides in the secreted. Inhibits voltage-gated calcium channels (Cav) in rat cerebellar granule cells. In Aphonopelma sp. (American tarantula), this protein is Omega-theraphotoxin-Asp3a.